Consider the following 247-residue polypeptide: LHFPL tetraspan subfamily member 4 protein (247 aa).

Transmembrane regions (helical) follow at residues 22–42, 97–117, 127–147, and 178–198; these read IGVL…VVFI, FFVL…SLFF, ICAW…MIFP, and ILAI…FVLG.

This sequence belongs to the LHFP family. In terms of assembly, interacts with GABA(A) receptor subunits. Identified in a complex of 720 kDa composed of LHFPL4, NLGN2, GABRA1, GABRB2, GABRG2 and GABRB3. Interacts with GABRB3. Interacts with GABRA2. Interacts with GABRG2. Interacts with GABRA1. Interacts with NLGN2; leading to mutual regulation of protein level and synaptic clustering.

The protein localises to the cell projection. The protein resides in the dendrite. It localises to the postsynaptic cell membrane. Plays a role in the regulation of inhibitory synapse formation and function by being involved in maintening gamma-aminobutyric acid receptors (GABAARs) clustering and their associated scaffold proteins at inhibitory synaptic sites. Acts in concert with NLGN2 to recruit or stabilize GABAARs. This chain is LHFPL tetraspan subfamily member 4 protein, found in Homo sapiens (Human).